Consider the following 160-residue polypeptide: Lymphocyte antigen 96 (160 aa).

A signal peptide spans 1–16; the sequence is MFPFMLFSTLFSSIFT. Intrachain disulfides connect Cys25–Cys51, Cys37–Cys148, and Cys95–Cys105. A glycan (N-linked (GlcNAc...) asparagine) is linked at Asn26. Asn114 carries N-linked (GlcNAc...) asparagine glycosylation. The segment at 119–123 is interaction with lipopolysaccharide; it reads FSFQG. Asn150 carries an N-linked (GlcNAc...) asparagine glycan.

As to quaternary structure, heterogeneous homomer formed from homodimers; disulfide-linked. Belongs to the lipopolysaccharide (LPS) receptor, a multi-protein complex containing at least CD14, LY96 and TLR4. Binds to the extracellular domains of TLR2 and TLR4. Ligand binding induces interaction with TLR4 and oligomerization of the complex. N-glycosylated.

It localises to the secreted. Its subcellular location is the extracellular space. Its function is as follows. Binds bacterial lipopolysaccharide (LPS). Cooperates with TLR4 in the innate immune response to bacterial lipopolysaccharide (LPS), and with TLR2 in the response to cell wall components from Gram-positive and Gram-negative bacteria. Enhances TLR4-dependent activation of NF-kappa-B. Cells expressing both LY96 and TLR4, but not TLR4 alone, respond to LPS. The polypeptide is Lymphocyte antigen 96 (LY96) (Bos taurus (Bovine)).